Consider the following 433-residue polypeptide: Ribosome biogenesis protein WDR12 homolog (433 aa).

A ubiquitin-like (UBL) domain region spans residues 21–102 (VEVFVVSYRH…ESVISIECIV (82 aa)). 7 WD repeats span residues 114–151 (ALLD…LTSS), 153–194 (LHEE…SSTF), 203–242 (GHER…TSTV), 270–310 (GHKD…QINT), 312–351 (AAKK…GTLV), 357–397 (GHCG…TPLY), and 401–433 (GHSD…RRKM).

Belongs to the WD repeat WDR12/YTM1 family.

Its subcellular location is the nucleus. It is found in the nucleolus. The protein localises to the nucleoplasm. In terms of biological role, required for maturation of ribosomal RNAs and formation of the large ribosomal subunit. This Brugia malayi (Filarial nematode worm) protein is Ribosome biogenesis protein WDR12 homolog.